Consider the following 246-residue polypeptide: 1-(5-phosphoribosyl)-5-[(5-phosphoribosylamino)methylideneamino] imidazole-4-carboxamide isomerase (246 aa).

Asp8 serves as the catalytic Proton acceptor. Catalysis depends on Asp129, which acts as the Proton donor.

The protein belongs to the HisA/HisF family.

The protein localises to the cytoplasm. The enzyme catalyses 1-(5-phospho-beta-D-ribosyl)-5-[(5-phospho-beta-D-ribosylamino)methylideneamino]imidazole-4-carboxamide = 5-[(5-phospho-1-deoxy-D-ribulos-1-ylimino)methylamino]-1-(5-phospho-beta-D-ribosyl)imidazole-4-carboxamide. It functions in the pathway amino-acid biosynthesis; L-histidine biosynthesis; L-histidine from 5-phospho-alpha-D-ribose 1-diphosphate: step 4/9. The polypeptide is 1-(5-phosphoribosyl)-5-[(5-phosphoribosylamino)methylideneamino] imidazole-4-carboxamide isomerase (Methylocella silvestris (strain DSM 15510 / CIP 108128 / LMG 27833 / NCIMB 13906 / BL2)).